Consider the following 25-residue polypeptide: Panurgine R (25 aa).

2 disulfide bridges follow: C8–C23 and C11–C19.

It is found in the target cell membrane. The protein resides in the secreted. In terms of biological role, antimicrobial peptide active against Gram-positive bacteria M.luteus (MIC=0.8 uM) and B.subtilis (MIC=1.5 uM). Less active against Gram-negative bacteria E.coli (MIC=32.5 uM) and yeast C.albicans (MIC=18.7 uM). Not active against S.aureus and P.aeruginosa. Has no hemolytic activity against human erythrocytes. Probably acts by disrupting membranes of target cells. In Panurgus calcaratus (Solitary bee), this protein is Panurgine R.